We begin with the raw amino-acid sequence, 119 residues long: Large ribosomal subunit protein uL22 (119 aa).

The protein belongs to the universal ribosomal protein uL22 family. Part of the 50S ribosomal subunit.

Functionally, this protein binds specifically to 23S rRNA; its binding is stimulated by other ribosomal proteins, e.g. L4, L17, and L20. It is important during the early stages of 50S assembly. It makes multiple contacts with different domains of the 23S rRNA in the assembled 50S subunit and ribosome. Its function is as follows. The globular domain of the protein is located near the polypeptide exit tunnel on the outside of the subunit, while an extended beta-hairpin is found that lines the wall of the exit tunnel in the center of the 70S ribosome. The chain is Large ribosomal subunit protein uL22 from Trichodesmium erythraeum (strain IMS101).